Here is a 302-residue protein sequence, read N- to C-terminus: tRNA pseudouridine synthase B (302 aa).

The active-site Nucleophile is the Asp43.

It belongs to the pseudouridine synthase TruB family. Type 1 subfamily.

It carries out the reaction uridine(55) in tRNA = pseudouridine(55) in tRNA. Responsible for synthesis of pseudouridine from uracil-55 in the psi GC loop of transfer RNAs. The chain is tRNA pseudouridine synthase B from Burkholderia mallei (strain NCTC 10247).